The following is a 200-amino-acid chain: Rho GDP-dissociation inhibitor 2 (200 aa).

Residues 1 to 40 (MTEKAPEPHVEEDDDELDGKLNYKPPPQKSLKELQEMDKD) form a disordered region. The residue at position 2 (T2) is an N-acetylthreonine. K20 is subject to N6-acetyllysine. The residue at position 23 (Y23) is a Phosphotyrosine. K24, K39, K46, K101, and K123 each carry N6-acetyllysine. Residues 30-40 (SLKELQEMDKD) are compositionally biased toward basic and acidic residues. S144 is modified (phosphoserine). At K174 the chain carries N6-acetyllysine.

The protein belongs to the Rho GDI family. Interacts with RHOA. Interacts with RAC1. Interacts with RAC2. Interacts with CDC42.

It localises to the cytoplasm. The protein localises to the cytosol. Functionally, regulates the GDP/GTP exchange reaction of the Rho proteins by inhibiting the dissociation of GDP from them, and the subsequent binding of GTP to them. Regulates reorganization of the actin cytoskeleton mediated by Rho family members. This Bos taurus (Bovine) protein is Rho GDP-dissociation inhibitor 2 (ARHGDIB).